The sequence spans 415 residues: Alpha-N-acetylgalactosaminidase (415 aa).

The signal sequence occupies residues 1-17 (MLQKTVLLLALVAQVLM). Cystine bridges form between Cys38/Cys80, Cys42/Cys49, and Cys127/Cys158. Residues 78–79 (DD) and Lys154 each bind substrate. The active-site Nucleophile is the Asp156. N-linked (GlcNAc...) asparagine glycosylation is present at Asn177. An intrachain disulfide couples Cys187 to Cys209. Position 188 (Ser188) interacts with substrate. An N-linked (GlcNAc...) asparagine glycan is attached at Asn201. Residues Arg213 and Asp217 each coordinate substrate. The Proton donor role is filled by Asp217. Ser322 carries the phosphoserine modification. N-linked (GlcNAc...) asparagine glycosylation is present at Asn330. A Phosphoserine modification is found at Ser332. An N-linked (GlcNAc...) asparagine glycan is attached at Asn385.

This sequence belongs to the glycosyl hydrolase 27 family. Homodimer.

It localises to the lysosome. It catalyses the reaction Cleavage of non-reducing alpha-(1-&gt;3)-N-acetylgalactosamine residues from human blood group A and AB mucin glycoproteins, Forssman hapten and blood group A lacto series glycolipids.. The catalysed reaction is a neolactoside IV(3)-alpha-GalNAc,IV(2)-alpha-Fuc-nLc4Cer(d18:1(4E)) + H2O = a neolactoside IV(2)-alpha-Fuc-nLc4Cer(d18:1(4E)) + N-acetyl-alpha-D-galactosamine. It carries out the reaction a neolactoside IV(3)-alpha-GalNAc,IV(2)-alpha-Fuc-nLc4Cer(d18:0) + H2O = a neolactoside IV(2)-alpha-Fuc-nLc4Cer(d18:0) + N-acetyl-alpha-D-galactosamine. The enzyme catalyses a globoside IV3GalNAc-Gb4Cer + H2O = N-acetyl-alpha-D-galactosamine + a globoside Gb4Cer. Removes terminal alpha-N-acetylgalactosamine residues from glycolipids and glycopeptides. Required for the breakdown of glycolipids. The protein is Alpha-N-acetylgalactosaminidase (Naga) of Rattus norvegicus (Rat).